We begin with the raw amino-acid sequence, 68 residues long: Large ribosomal subunit protein bL31 (68 aa).

Residues Cys16, Cys18, Cys36, and Cys39 each contribute to the Zn(2+) site.

Belongs to the bacterial ribosomal protein bL31 family. Type A subfamily. As to quaternary structure, part of the 50S ribosomal subunit. The cofactor is Zn(2+).

In terms of biological role, binds the 23S rRNA. The chain is Large ribosomal subunit protein bL31 from Lachnospira eligens (strain ATCC 27750 / DSM 3376 / VPI C15-48 / C15-B4) (Eubacterium eligens).